Consider the following 270-residue polypeptide: Glucosamine-6-phosphate deaminase (270 aa).

The active-site Proton acceptor; for enolization step is the aspartate 72. Catalysis depends on aspartate 141, which acts as the For ring-opening step. Histidine 143 functions as the Proton acceptor; for ring-opening step in the catalytic mechanism. The active-site For ring-opening step is the glutamate 148.

Belongs to the glucosamine/galactosamine-6-phosphate isomerase family. NagB subfamily. In terms of assembly, homohexamer.

The catalysed reaction is alpha-D-glucosamine 6-phosphate + H2O = beta-D-fructose 6-phosphate + NH4(+). The protein operates within amino-sugar metabolism; N-acetylneuraminate degradation; D-fructose 6-phosphate from N-acetylneuraminate: step 5/5. Its activity is regulated as follows. Allosterically activated by N-acetylglucosamine 6-phosphate (GlcNAc6P). Its function is as follows. Catalyzes the reversible isomerization-deamination of glucosamine 6-phosphate (GlcN6P) to form fructose 6-phosphate (Fru6P) and ammonium ion. This chain is Glucosamine-6-phosphate deaminase, found in Photorhabdus laumondii subsp. laumondii (strain DSM 15139 / CIP 105565 / TT01) (Photorhabdus luminescens subsp. laumondii).